Reading from the N-terminus, the 291-residue chain is Ribose-phosphate pyrophosphokinase (291 aa).

ATP-binding positions include 34 to 36 (DGE) and 93 to 94 (RQ). Mg(2+)-binding residues include histidine 127 and aspartate 165. The active site involves lysine 188. Residues arginine 190, aspartate 216, and 220–224 (STGGT) contribute to the D-ribose 5-phosphate site.

This sequence belongs to the ribose-phosphate pyrophosphokinase family. Class III (archaeal) subfamily. Mg(2+) serves as cofactor.

The protein resides in the cytoplasm. It catalyses the reaction D-ribose 5-phosphate + ATP = 5-phospho-alpha-D-ribose 1-diphosphate + AMP + H(+). Its pathway is metabolic intermediate biosynthesis; 5-phospho-alpha-D-ribose 1-diphosphate biosynthesis; 5-phospho-alpha-D-ribose 1-diphosphate from D-ribose 5-phosphate (route I): step 1/1. Involved in the biosynthesis of the central metabolite phospho-alpha-D-ribosyl-1-pyrophosphate (PRPP) via the transfer of pyrophosphoryl group from ATP to 1-hydroxyl of ribose-5-phosphate (Rib-5-P). This is Ribose-phosphate pyrophosphokinase from Sulfurisphaera tokodaii (strain DSM 16993 / JCM 10545 / NBRC 100140 / 7) (Sulfolobus tokodaii).